The sequence spans 883 residues: Kinesin-like protein 5 (883 aa).

One can recognise a Kinesin motor domain in the interval 6 to 390; the sequence is SITVTVRVRP…LKYANRAKNI (385 aa). 144–151 provides a ligand contact to ATP; it reads GATGCGKT. Coiled-coil stretches lie at residues 396 to 435 and 563 to 588; these read RNMI…SSQS and LQDE…VDEF. Residues 755 to 785 form a disordered region; the sequence is VSPMLEDKPEPGLLIKSPLEKKQEVNSESTQ.

Belongs to the TRAFAC class myosin-kinesin ATPase superfamily. Kinesin family. Kinesin II subfamily. Heterodimer with klp6.

It is found in the cytoplasm. The protein localises to the cytoskeleton. It localises to the chromosome. Its subcellular location is the centromere. The protein resides in the kinetochore. It is found in the spindle. In terms of biological role, has a role in establishing metaphase during mitosis. Required for chromosome segregation where it generates tension during kinetochore capturing. The sequence is that of Kinesin-like protein 5 (klp5) from Schizosaccharomyces pombe (strain 972 / ATCC 24843) (Fission yeast).